The following is a 772-amino-acid chain: Carnitine O-palmitoyltransferase 1, muscle isoform (772 aa).

Over 1-47 the chain is Cytoplasmic; sequence MAEAHQAVAFQFTVTPDGVDFRLSREALRHIYLSGINSWKKRLIRIK. A helical transmembrane segment spans residues 48–73; sequence NGILRGVYPGSPTSWLVVVMATVGSN. The Mitochondrial intermembrane portion of the chain corresponds to 74 to 102; the sequence is YCKVDISMGLVHCIQRCLPTRYGSYGTPQ. A helical transmembrane segment spans residues 103 to 122; sequence TETLLSMVIFSTGVWATGIF. The Cytoplasmic segment spans residues 123–772; sequence LFRQTLKLLL…DLFKISKTDS (650 aa). His473 (proton acceptor) is an active-site residue. 555-567 is a CoA binding site; it reads GKGLIKKCRTSPD. (R)-carnitine is bound by residues Tyr589 and Thr602.

Belongs to the carnitine/choline acetyltransferase family. High expression in heart, skeletal muscle and brown adipose tissue. Also expressed in white adipose tissue, but not in liver.

It localises to the mitochondrion outer membrane. It carries out the reaction (R)-carnitine + hexadecanoyl-CoA = O-hexadecanoyl-(R)-carnitine + CoA. The protein operates within lipid metabolism; fatty acid beta-oxidation. Catalyzes the transfer of the acyl group of long-chain fatty acid-CoA conjugates onto carnitine, an essential step for the mitochondrial uptake of long-chain fatty acids and their subsequent beta-oxidation in the mitochondrion. The polypeptide is Carnitine O-palmitoyltransferase 1, muscle isoform (Cpt1b) (Rattus norvegicus (Rat)).